Reading from the N-terminus, the 253-residue chain is Imidazole glycerol phosphate synthase subunit HisF (253 aa).

Residues aspartate 11 and aspartate 130 contribute to the active site.

It belongs to the HisA/HisF family. In terms of assembly, heterodimer of HisH and HisF.

The protein resides in the cytoplasm. The enzyme catalyses 5-[(5-phospho-1-deoxy-D-ribulos-1-ylimino)methylamino]-1-(5-phospho-beta-D-ribosyl)imidazole-4-carboxamide + L-glutamine = D-erythro-1-(imidazol-4-yl)glycerol 3-phosphate + 5-amino-1-(5-phospho-beta-D-ribosyl)imidazole-4-carboxamide + L-glutamate + H(+). Its pathway is amino-acid biosynthesis; L-histidine biosynthesis; L-histidine from 5-phospho-alpha-D-ribose 1-diphosphate: step 5/9. In terms of biological role, IGPS catalyzes the conversion of PRFAR and glutamine to IGP, AICAR and glutamate. The HisF subunit catalyzes the cyclization activity that produces IGP and AICAR from PRFAR using the ammonia provided by the HisH subunit. In Opitutus terrae (strain DSM 11246 / JCM 15787 / PB90-1), this protein is Imidazole glycerol phosphate synthase subunit HisF.